An 89-amino-acid chain; its full sequence is Small ribosomal subunit protein uS15 (89 aa).

This sequence belongs to the universal ribosomal protein uS15 family. In terms of assembly, part of the 30S ribosomal subunit. Forms a bridge to the 50S subunit in the 70S ribosome, contacting the 23S rRNA.

Its function is as follows. One of the primary rRNA binding proteins, it binds directly to 16S rRNA where it helps nucleate assembly of the platform of the 30S subunit by binding and bridging several RNA helices of the 16S rRNA. Functionally, forms an intersubunit bridge (bridge B4) with the 23S rRNA of the 50S subunit in the ribosome. This is Small ribosomal subunit protein uS15 from Acinetobacter baylyi (strain ATCC 33305 / BD413 / ADP1).